A 148-amino-acid chain; its full sequence is Nucleoside diphosphate kinase A (148 aa).

Residues Lys9, Phe57, Arg85, Thr91, Arg102, and Asn112 each coordinate ATP. Catalysis depends on His115, which acts as the Pros-phosphohistidine intermediate.

This sequence belongs to the NDK family. It depends on Mg(2+) as a cofactor.

It catalyses the reaction a 2'-deoxyribonucleoside 5'-diphosphate + ATP = a 2'-deoxyribonucleoside 5'-triphosphate + ADP. The enzyme catalyses a ribonucleoside 5'-diphosphate + ATP = a ribonucleoside 5'-triphosphate + ADP. In terms of biological role, major role in the synthesis of nucleoside triphosphates other than ATP. The ATP gamma phosphate is transferred to the NDP beta phosphate via a ping-pong mechanism, using a phosphorylated active-site intermediate. This Flaveria bidentis (Coastal plain yellowtops) protein is Nucleoside diphosphate kinase A.